The following is a 339-amino-acid chain: Phosphoribosylformylglycinamidine cyclo-ligase (339 aa).

This sequence belongs to the AIR synthase family.

It is found in the cytoplasm. The catalysed reaction is 2-formamido-N(1)-(5-O-phospho-beta-D-ribosyl)acetamidine + ATP = 5-amino-1-(5-phospho-beta-D-ribosyl)imidazole + ADP + phosphate + H(+). Its pathway is purine metabolism; IMP biosynthesis via de novo pathway; 5-amino-1-(5-phospho-D-ribosyl)imidazole from N(2)-formyl-N(1)-(5-phospho-D-ribosyl)glycinamide: step 2/2. The sequence is that of Phosphoribosylformylglycinamidine cyclo-ligase from Desulfitobacterium hafniense (strain DSM 10664 / DCB-2).